The chain runs to 264 residues: Acyl-[acyl-carrier-protein]--UDP-N-acetylglucosamine O-acyltransferase (264 aa).

It belongs to the transferase hexapeptide repeat family. LpxA subfamily. In terms of assembly, homotrimer.

Its subcellular location is the cytoplasm. It carries out the reaction a (3R)-hydroxyacyl-[ACP] + UDP-N-acetyl-alpha-D-glucosamine = a UDP-3-O-[(3R)-3-hydroxyacyl]-N-acetyl-alpha-D-glucosamine + holo-[ACP]. It participates in glycolipid biosynthesis; lipid IV(A) biosynthesis; lipid IV(A) from (3R)-3-hydroxytetradecanoyl-[acyl-carrier-protein] and UDP-N-acetyl-alpha-D-glucosamine: step 1/6. Involved in the biosynthesis of lipid A, a phosphorylated glycolipid that anchors the lipopolysaccharide to the outer membrane of the cell. The sequence is that of Acyl-[acyl-carrier-protein]--UDP-N-acetylglucosamine O-acyltransferase from Haemophilus ducreyi (strain 35000HP / ATCC 700724).